Here is a 93-residue protein sequence, read N- to C-terminus: YcgL domain-containing protein VV1058 (93 aa).

Residues 1 to 84 (MLCSIYKSSK…PPENLLQQHK (84 aa)) enclose the YcgL domain. The tract at residues 74–93 (PPPENLLQQHKERKAQQKND) is disordered.

The chain is YcgL domain-containing protein VV1058 from Vibrio vulnificus (strain YJ016).